Reading from the N-terminus, the 331-residue chain is Ketol-acid reductoisomerase (NADP(+)) (331 aa).

A KARI N-terminal Rossmann domain is found at 2-182 (IKKYYDADCN…GAGRAGILET (181 aa)). NADP(+) contacts are provided by residues 25 to 28 (YGSQ), R48, and S51. H108 is a catalytic residue. G134 contacts NADP(+). Positions 183-329 (TFREETETDL…AELRKMMSWI (147 aa)) constitute a KARI C-terminal knotted domain. Positions 191, 195, 227, and 231 each coordinate Mg(2+). Residue S252 participates in substrate binding.

Belongs to the ketol-acid reductoisomerase family. The cofactor is Mg(2+).

The catalysed reaction is (2R)-2,3-dihydroxy-3-methylbutanoate + NADP(+) = (2S)-2-acetolactate + NADPH + H(+). It carries out the reaction (2R,3R)-2,3-dihydroxy-3-methylpentanoate + NADP(+) = (S)-2-ethyl-2-hydroxy-3-oxobutanoate + NADPH + H(+). Its pathway is amino-acid biosynthesis; L-isoleucine biosynthesis; L-isoleucine from 2-oxobutanoate: step 2/4. It functions in the pathway amino-acid biosynthesis; L-valine biosynthesis; L-valine from pyruvate: step 2/4. In terms of biological role, involved in the biosynthesis of branched-chain amino acids (BCAA). Catalyzes an alkyl-migration followed by a ketol-acid reduction of (S)-2-acetolactate (S2AL) to yield (R)-2,3-dihydroxy-isovalerate. In the isomerase reaction, S2AL is rearranged via a Mg-dependent methyl migration to produce 3-hydroxy-3-methyl-2-ketobutyrate (HMKB). In the reductase reaction, this 2-ketoacid undergoes a metal-dependent reduction by NADPH to yield (R)-2,3-dihydroxy-isovalerate. This chain is Ketol-acid reductoisomerase (NADP(+)), found in Brachyspira hyodysenteriae (strain ATCC 49526 / WA1).